Reading from the N-terminus, the 458-residue chain is Flavohemoprotein (458 aa).

The 157-residue stretch at 2-158 (PLSEDTIKAV…LAHLFVRREE (157 aa)) folds into the Globin domain. His-107 contacts heme b. Active-site charge relay system residues include Tyr-117 and Glu-157. The reductase stretch occupies residues 169-457 (GGWRQTRSFR…FEMFGPFKPL (289 aa)). In terms of domain architecture, FAD-binding FR-type spans 172 to 279 (RQTRSFRVEE…APPYGDFFLE (108 aa)). Residues Tyr-211 and 228–231 (RQYS) each bind FAD. An NADP(+)-binding site is contributed by 320 to 325 (GIGQTP). 450 to 453 (MFGP) provides a ligand contact to FAD.

The protein belongs to the globin family. Two-domain flavohemoproteins subfamily. This sequence in the C-terminal section; belongs to the flavoprotein pyridine nucleotide cytochrome reductase family. As to quaternary structure, monomer. Heme b serves as cofactor. It depends on FAD as a cofactor.

It carries out the reaction 2 nitric oxide + NADPH + 2 O2 = 2 nitrate + NADP(+) + H(+). The catalysed reaction is 2 nitric oxide + NADH + 2 O2 = 2 nitrate + NAD(+) + H(+). Its function is as follows. Flavohemoprotein involved in nitric oxide (NO) detoxification in an aerobic process, termed nitric oxide dioxygenase (NOD) reaction that utilizes O(2) and NAD(P)H to convert NO to nitrate, which protects the protozoan parasite from various noxious nitrogen compounds. Therefore, plays a central role in the inducible response to nitrosative stress. May also be involved in O(2) detoxification. This Giardia intestinalis (strain ATCC 50581 / GS clone H7) (Giardia lamblia) protein is Flavohemoprotein (hmpA).